The chain runs to 485 residues: Membrane-bound lytic murein transglycosylase F (485 aa).

The signal sequence occupies residues 1–29; sequence MFAHTALRQRCAKWLLATGLFLLLGACVE. Residues 30–267 are non-LT domain; sequence KPSTLERVKE…RLKDRYYGHV (238 aa). An LT domain region spans residues 268 to 485; it reads DVLGYVGAYT…DKPADKSSPM (218 aa). Glutamate 314 is a catalytic residue. The disordered stretch occupies residues 465–485; that stretch reads EGNLHVPGVNKDKPADKSSPM. The span at 474 to 485 shows a compositional bias: basic and acidic residues; it reads NKDKPADKSSPM.

The protein in the N-terminal section; belongs to the bacterial solute-binding protein 3 family. This sequence in the C-terminal section; belongs to the transglycosylase Slt family.

The protein localises to the cell outer membrane. The catalysed reaction is Exolytic cleavage of the (1-&gt;4)-beta-glycosidic linkage between N-acetylmuramic acid (MurNAc) and N-acetylglucosamine (GlcNAc) residues in peptidoglycan, from either the reducing or the non-reducing ends of the peptidoglycan chains, with concomitant formation of a 1,6-anhydrobond in the MurNAc residue.. Its function is as follows. Murein-degrading enzyme that degrades murein glycan strands and insoluble, high-molecular weight murein sacculi, with the concomitant formation of a 1,6-anhydromuramoyl product. Lytic transglycosylases (LTs) play an integral role in the metabolism of the peptidoglycan (PG) sacculus. Their lytic action creates space within the PG sacculus to allow for its expansion as well as for the insertion of various structures such as secretion systems and flagella. This chain is Membrane-bound lytic murein transglycosylase F, found in Pseudomonas putida (strain ATCC 700007 / DSM 6899 / JCM 31910 / BCRC 17059 / LMG 24140 / F1).